The following is a 318-amino-acid chain: tRNA(Ile)-lysidine synthase (318 aa).

26-31 is a binding site for ATP; that stretch reads SGGADS.

The protein belongs to the tRNA(Ile)-lysidine synthase family.

The protein localises to the cytoplasm. The catalysed reaction is cytidine(34) in tRNA(Ile2) + L-lysine + ATP = lysidine(34) in tRNA(Ile2) + AMP + diphosphate + H(+). In terms of biological role, ligates lysine onto the cytidine present at position 34 of the AUA codon-specific tRNA(Ile) that contains the anticodon CAU, in an ATP-dependent manner. Cytidine is converted to lysidine, thus changing the amino acid specificity of the tRNA from methionine to isoleucine. The polypeptide is tRNA(Ile)-lysidine synthase (Nocardia farcinica (strain IFM 10152)).